The sequence spans 223 residues: Agamous-like MADS-box protein AGL11 (223 aa).

The 61-residue stretch at 1 to 61 folds into the MADS-box domain; that stretch reads MGRGKIEIKR…GRVYEYSNNN (61 aa). The 91-residue stretch at 87–177 folds into the K-box domain; sequence AQYYQQESAK…RTKIAEVERL (91 aa).

It is found in the nucleus. Probable transcription factor involved in seed development. The protein is Agamous-like MADS-box protein AGL11 of Vitis vinifera (Grape).